The sequence spans 377 residues: Queuine tRNA-ribosyltransferase (377 aa).

D91 (proton acceptor) is an active-site residue. Substrate-binding positions include D91–F95, D145, Q189, and G216. The RNA binding stretch occupies residues G247–D253. Residue D266 is the Nucleophile of the active site. The interval T271–R275 is RNA binding; important for wobble base 34 recognition. Zn(2+) contacts are provided by C304, C306, C309, and H335.

This sequence belongs to the queuine tRNA-ribosyltransferase family. As to quaternary structure, homodimer. Within each dimer, one monomer is responsible for RNA recognition and catalysis, while the other monomer binds to the replacement base PreQ1. The cofactor is Zn(2+).

It catalyses the reaction 7-aminomethyl-7-carbaguanine + guanosine(34) in tRNA = 7-aminomethyl-7-carbaguanosine(34) in tRNA + guanine. The protein operates within tRNA modification; tRNA-queuosine biosynthesis. Catalyzes the base-exchange of a guanine (G) residue with the queuine precursor 7-aminomethyl-7-deazaguanine (PreQ1) at position 34 (anticodon wobble position) in tRNAs with GU(N) anticodons (tRNA-Asp, -Asn, -His and -Tyr). Catalysis occurs through a double-displacement mechanism. The nucleophile active site attacks the C1' of nucleotide 34 to detach the guanine base from the RNA, forming a covalent enzyme-RNA intermediate. The proton acceptor active site deprotonates the incoming PreQ1, allowing a nucleophilic attack on the C1' of the ribose to form the product. After dissociation, two additional enzymatic reactions on the tRNA convert PreQ1 to queuine (Q), resulting in the hypermodified nucleoside queuosine (7-(((4,5-cis-dihydroxy-2-cyclopenten-1-yl)amino)methyl)-7-deazaguanosine). In Vibrio parahaemolyticus serotype O3:K6 (strain RIMD 2210633), this protein is Queuine tRNA-ribosyltransferase.